The sequence spans 425 residues: Synaptotagmin-4 (425 aa).

Over 1 to 16 the chain is Vesicular; it reads MAPITTSREEFDEIPT. The chain crosses the membrane as a helical span at residues 17–37; that stretch reads VVGIFSAFGLVFTVSLFAWIC. Over 38–425 the chain is Cytoplasmic; it reads CQRKSSKSNK…IAKWHVLCDG (388 aa). Residues 73–83 are compositionally biased toward basic and acidic residues; sequence FGADDKNEVKN. 2 disordered regions span residues 73–93 and 127–147; these read FGAD…NSLH and LEGE…SLTS. Serine 135 is modified (phosphoserine; by MAPK8). Over residues 135-146 the composition is skewed to low complexity; sequence SPESLKSSTSLT. 2 C2 domains span residues 153–274 and 287–420; these read KLGT…MLMN and GRGE…AKWH. Positions 246, 249, and 252 each coordinate Ca(2+).

Belongs to the synaptotagmin family. In terms of assembly, interacts with KIF1A; the interaction increases in presence of calcium and decreases when SYT4 is phosphorylated at Ser-135. The cofactor is Ca(2+). In terms of processing, phosphorylation at Ser-135 by MAPK8/JNK1 reduces interaction with KIF1A and neuronal dense core vesicles mobility. In terms of tissue distribution, expressed in melanocytes. Expressed in brain. Within brain, expression is highest in hippocampus, with substantial levels also detected in amygdala and thalamus.

The protein localises to the cytoplasmic vesicle. It is found in the secretory vesicle. Its subcellular location is the neuronal dense core vesicle membrane. Synaptotagmin family member which does not bind Ca(2+). Involved in neuronal dense core vesicles (DCVs) mobility through its interaction with KIF1A. Upon increased neuronal activity, phosphorylation by MAPK8/JNK1 destabilizes the interaction with KIF1A and captures DCVs to synapses. Plays a role in dendrite formation by melanocytes. This Homo sapiens (Human) protein is Synaptotagmin-4 (SYT4).